We begin with the raw amino-acid sequence, 197 residues long: Lipoprotein signal peptidase (197 aa).

2 consecutive transmembrane segments (helical) span residues 73–93 (SNAIFLITNTLIVCYLYYLMI) and 97–117 (TIGSFAGYSFVIGGAVGNLID). Catalysis depends on residues Asp126 and Asp144. The chain crosses the membrane as a helical span at residues 135–155 (YSFPVFNLADCFITIGVIILI).

Belongs to the peptidase A8 family.

Its subcellular location is the cell inner membrane. It carries out the reaction Release of signal peptides from bacterial membrane prolipoproteins. Hydrolyzes -Xaa-Yaa-Zaa-|-(S,diacylglyceryl)Cys-, in which Xaa is hydrophobic (preferably Leu), and Yaa (Ala or Ser) and Zaa (Gly or Ala) have small, neutral side chains.. Its pathway is protein modification; lipoprotein biosynthesis (signal peptide cleavage). Functionally, this protein specifically catalyzes the removal of signal peptides from prolipoproteins. In Rickettsia felis (strain ATCC VR-1525 / URRWXCal2) (Rickettsia azadi), this protein is Lipoprotein signal peptidase.